The primary structure comprises 296 residues: tRNA pseudouridine synthase B (296 aa).

Catalysis depends on D38, which acts as the Nucleophile.

It belongs to the pseudouridine synthase TruB family. Type 1 subfamily.

The catalysed reaction is uridine(55) in tRNA = pseudouridine(55) in tRNA. In terms of biological role, responsible for synthesis of pseudouridine from uracil-55 in the psi GC loop of transfer RNAs. In Ehrlichia ruminantium (strain Gardel), this protein is tRNA pseudouridine synthase B.